The sequence spans 302 residues: Transmembrane protein 191 (302 aa).

A coiled-coil region spans residues 5-147 (QEQLLQLQKD…HLELAEAKFS (143 aa)). Residues 39 to 66 (LTGRLEELRERERSLQRRRSQASRAIRG) are disordered. The span at 42–53 (RLEELRERERSL) shows a compositional bias: basic and acidic residues. The chain crosses the membrane as a helical span at residues 242 to 262 (LQTLLLLPLGFLVLPLIYVVL).

It belongs to the TMEM191 family.

It is found in the membrane. This chain is Transmembrane protein 191, found in Mus musculus (Mouse).